The primary structure comprises 639 residues: 3-hydroxybenzoate 4-monooxygenase (639 aa).

FAD is bound by residues Asp-34–Gln-64, Gln-73, Val-166, Asn-212, Arg-269–Tyr-271, Tyr-317, Asp-349, and Ser-365.

It belongs to the PheA/TfdB FAD monooxygenase family. As to quaternary structure, homodimer. The cofactor is FAD.

It catalyses the reaction 3-hydroxybenzoate + NADPH + O2 + H(+) = 3,4-dihydroxybenzoate + NADP(+) + H2O. Functionally, converts 3-hydroxybenzoate (m-hydroxybenzoate), and to a lesser extent p-hydroxybenzoate, to 3,4-dihydroxybenzoate (protocatechuate). Also acts on a number of analogs of 3-hydroxybenzoate substituted in the 2, 4, 5 and 6 positions. The chain is 3-hydroxybenzoate 4-monooxygenase (mobA) from Comamonas testosteroni (Pseudomonas testosteroni).